The sequence spans 713 residues: MTANAINGPVLPTPLATPGDNNKSADTTMADQGTRPESQPQGQNNGAKPQNGQTKPMSAANAKDPLRPRRKKAKRACFACQRAHLTCGDERPCQRCIKRGIQNACHDGVRKKAKYLHDAPNEALMPHLQGHLYTTQANTARNTIPLTRNGSNSKTNFYPQQQSSFNNFYQNKPDPTLNQPQLHDTGRPDTFPSQSPVSPTFNMTANPAASGNQGLPSSLSASNSNASGQAQNGFGSAFFDPSDPALFNFDLASMNFGNHYGALEFGMLGHMATGAGETPPSDGATQHGSVGRSGSGTYTAGSNFGESPTGQPSFLFGDPTIGGDWTSSVNTRNIYGQNMNNMSETPHAFAIESAPANFASPNSIESPLLTNTTTFDDNTAPTYANRANINSVPSQRQPVVSTPQLKHLQVGKRRQRNPSAIYDSVKEPYSYTTGFHSLTAFIQRRFSPQNTLRIAKALASIRPSFIATTKTLNRDDLIFMEKCFQRTLWEYEDFINACGTPTIVCRRTGEIAAVGKEFSILTGWKKEVLLGKEPNLNINTGGSSGAMSGVTSRGSFTPRTGMDINPTGRTQPVFLAELLDDESVVEFYEDFAKLAFGDSRGSVMTTCKLLKYKTKADMDMLSGTTSSAGGENEHGAAGNGDVKPENGMGASNGQSQHSLQRQRKWSRGGIAGEAGMNQLGFKDGKVECSYCWTVKRDVFDIPMLIVMNFLPCI.

Residues 1–70 (MTANAINGPV…NAKDPLRPRR (70 aa)) are disordered. Residues 19-56 (GDNNKSADTTMADQGTRPESQPQGQNNGAKPQNGQTKP) are compositionally biased toward polar residues. The segment at residues 77-105 (CFACQRAHLTCGDERPCQRCIKRGIQNAC) is a DNA-binding region (zn(2)-C6 fungal-type). Residues 145-159 (PLTRNGSNSKTNFYP) are compositionally biased toward polar residues. 4 disordered regions span residues 145–229 (PLTR…ASGQ), 274–318 (GAGE…LFGD), 541–564 (GGSS…GMDI), and 623–665 (GTTS…QRKW). Low complexity predominate over residues 160 to 171 (QQQSSFNNFYQN). Residues 191 to 212 (FPSQSPVSPTFNMTANPAASGN) show a composition bias toward polar residues. Residues 213-229 (QGLPSSLSASNSNASGQ) show a composition bias toward low complexity. 3 stretches are compositionally biased toward polar residues: residues 295-312 (SGTY…TGQP), 541-558 (GGSS…SFTP), and 649-659 (GASNGQSQHSL).

It belongs to the ERT1/acuK family.

It localises to the nucleus. Functionally, transcription factor which regulates nonfermentable carbon utilization. Activator of gluconeogenetic genes. The protein is Transcription activator of gluconeogenesis CPC735_053490 of Coccidioides posadasii (strain C735) (Valley fever fungus).